Here is a 256-residue protein sequence, read N- to C-terminus: DNA repair protein RecO (256 aa).

This sequence belongs to the RecO family.

Functionally, involved in DNA repair and RecF pathway recombination. This Desulforamulus reducens (strain ATCC BAA-1160 / DSM 100696 / MI-1) (Desulfotomaculum reducens) protein is DNA repair protein RecO.